Here is a 344-residue protein sequence, read N- to C-terminus: Anthranilate phosphoribosyltransferase (344 aa).

Residues Gly85, 88–89 (GD), Thr93, 95–98 (NIST), 113–121 (KHGGRSVSS), and Ser125 each bind 5-phospho-alpha-D-ribose 1-diphosphate. Gly85 serves as a coordination point for anthranilate. Residue Ser97 coordinates Mg(2+). Arg171 provides a ligand contact to anthranilate. The Mg(2+) site is built by Asp230 and Glu231.

This sequence belongs to the anthranilate phosphoribosyltransferase family. Homodimer. The cofactor is Mg(2+).

The enzyme catalyses N-(5-phospho-beta-D-ribosyl)anthranilate + diphosphate = 5-phospho-alpha-D-ribose 1-diphosphate + anthranilate. It functions in the pathway amino-acid biosynthesis; L-tryptophan biosynthesis; L-tryptophan from chorismate: step 2/5. Catalyzes the transfer of the phosphoribosyl group of 5-phosphorylribose-1-pyrophosphate (PRPP) to anthranilate to yield N-(5'-phosphoribosyl)-anthranilate (PRA). The protein is Anthranilate phosphoribosyltransferase of Delftia acidovorans (strain DSM 14801 / SPH-1).